We begin with the raw amino-acid sequence, 384 residues long: Probable fructokinase-6, chloroplastic (384 aa).

The N-terminal 46 residues, 1 to 46 (MALQATTTTFCFSGPTFRSTPHSLTSKRPISIKATTSSPSRLSNSR), are a transit peptide targeting the chloroplast. The segment at 34 to 61 (ATTSSPSRLSNSRSNLKGRALSSDGSTQ) is disordered. A compositionally biased stretch (low complexity) spans 35-48 (TTSSPSRLSNSRSN).

It belongs to the carbohydrate kinase PfkB family.

The protein resides in the plastid. It localises to the chloroplast. It catalyses the reaction D-fructose + ATP = D-fructose 6-phosphate + ADP + H(+). It functions in the pathway glycan biosynthesis; starch biosynthesis. Its function is as follows. May play an important role in maintaining the flux of carbon towards starch formation. This Arabidopsis thaliana (Mouse-ear cress) protein is Probable fructokinase-6, chloroplastic.